Here is a 287-residue protein sequence, read N- to C-terminus: uncharacterized protein (287 aa).

Residues 1–23 are disordered; it reads MTVSDSPAQRQTPPQTPGGTAPR. Low complexity predominate over residues 7–23; sequence PAQRQTPPQTPGGTAPR. 3 residues coordinate Mg(2+): Asp-31, Asp-33, and Asp-204.

It belongs to the HAD-like hydrolase superfamily. SerB family.

This is an uncharacterized protein from Mycobacterium tuberculosis (strain CDC 1551 / Oshkosh).